Here is a 404-residue protein sequence, read N- to C-terminus: Cysteine desulfurase IscS (404 aa).

Pyridoxal 5'-phosphate contacts are provided by residues 75-76, asparagine 155, glutamine 183, and 203-205; these read AT and SAH. The residue at position 206 (lysine 206) is an N6-(pyridoxal phosphate)lysine. A pyridoxal 5'-phosphate-binding site is contributed by threonine 243. Cysteine 328 acts as the Cysteine persulfide intermediate in catalysis. Cysteine 328 contributes to the [2Fe-2S] cluster binding site.

The protein belongs to the class-V pyridoxal-phosphate-dependent aminotransferase family. NifS/IscS subfamily. As to quaternary structure, homodimer. Forms a heterotetramer with IscU, interacts with other sulfur acceptors. Pyridoxal 5'-phosphate serves as cofactor.

The protein localises to the cytoplasm. It carries out the reaction (sulfur carrier)-H + L-cysteine = (sulfur carrier)-SH + L-alanine. The protein operates within cofactor biosynthesis; iron-sulfur cluster biosynthesis. In terms of biological role, master enzyme that delivers sulfur to a number of partners involved in Fe-S cluster assembly, tRNA modification or cofactor biosynthesis. Catalyzes the removal of elemental sulfur atoms from cysteine to produce alanine. Functions as a sulfur delivery protein for Fe-S cluster synthesis onto IscU, an Fe-S scaffold assembly protein, as well as other S acceptor proteins. In Photorhabdus laumondii subsp. laumondii (strain DSM 15139 / CIP 105565 / TT01) (Photorhabdus luminescens subsp. laumondii), this protein is Cysteine desulfurase IscS.